We begin with the raw amino-acid sequence, 861 residues long: MQEFYDPKNIESTIQQYWHENNTFTVTEDFSKEKYYCLSMLPYPSGNLHMGHVRNYTIGDVLSRYHRMLGKNVMQPIGWDAFGLPAERAALKNQTAPATWTYANIETMKKQLKQLGFSYDWSREITTCRPEYYRWEQWFFIQLYEKGLVYKKTSFVNWCSNDQTVLANEQVIDGCCWRCGAPIMLKDIPQWFLKITAYADQLLHDLDKLDGWPEQIKNMQRNWIGRSEGINITFQVIDMKETLTIYTTRPDTLMGVTYLSIAINHHLAQQAANNNRLLSDFIEHSRPTKLSEAEIVKVNRVKTGIFTGLYAIHPLTEEKLPIWVTNFVLMDYGTGAIMAVPGHDQRDWDFARQYNLPVKNIIRNIDGSKPTISGIIPEGILYNSGEFNGLRSLEASKIITDILVARGIGETKVNYRLRDWVISRQRYWGTPIPMMTLEDGTVVPTPVDQLPVILPEYLLINSISNPLKDDHLWMKTNYNNNIATRETDTFDTFMESSWYYARYTCPNYDQGMLDTTAANYWLPIDQYIGGIEHAIMHLMYFRFYHKLLRDAGMLTSDEPTIRILCQGMVLADSFYYISCTTGERIWVSPINVRVQRDEKGNIINAIDLQGHHLVYAGTIKMSKSKNNSIDPLTMVEKYGADTIRLFIMFASPVTMALEWRESGVEGANRFLKRLWKLTYDHIQRGKVIKLDLAAMSNDNKILRRELHQTIAKVTDDISRRYAFNTAIAALMEITNKLMHASYHSQQDRAIVQEALLAVVRMLYPFTPHLCFKLWQALNGEGDIDNAPWPIVDQLALVEDTNLIVIQINGRFRSKIIVPVSADKALIIERASKEKLVAKYLEGTKVQKIIYVPGKLLNLVLK.

Residues 42–52 carry the 'HIGH' region motif; it reads PYPSGNLHMGH. Positions 620–624 match the 'KMSKS' region motif; that stretch reads KMSKS. Residue lysine 623 coordinates ATP.

The protein belongs to the class-I aminoacyl-tRNA synthetase family.

It is found in the cytoplasm. The catalysed reaction is tRNA(Leu) + L-leucine + ATP = L-leucyl-tRNA(Leu) + AMP + diphosphate. This Baumannia cicadellinicola subsp. Homalodisca coagulata protein is Leucine--tRNA ligase.